The following is a 354-amino-acid chain: MEHFDVAIIGLGPAGSALARKLAGKMQVIALDKKHQCGTEGFSKPCGGLLAPDAQRSFIRDGLTLPVDVIANPQIFSVKTVDVAASLTRNYQRSYININRHAFDLWMKSLIPASVEVYHDSLCRKIWREDDKWHVIFRADGWEQHITARYLVGADGANSMVRRHLYPDHQIRKYVAIQQWFAEKHPVPFYSCIFDNSITNCYSWSISKDGYFIFGGAYPMKDGQTRFTTLKEKMSAFQFQFGKTVKSEKCTVLFPSRWQDFVCGKDNAFLIGEAAGFISASSLEGISYALDSTDILRSVLLKQPEKLNTAYWRATRKLRLKLFGKIVKSRCLTAPALRKWIMRSGVAHIPQLKD.

Belongs to the CbrA family.

The sequence is that of Protein CbrA (cbrA) from Escherichia coli (strain K12).